We begin with the raw amino-acid sequence, 407 residues long: uncharacterized protein (407 aa).

Residues 10 to 37 (DKLEQLANDVVTELTDMENKYKDLHVEL) adopt a coiled-coil conformation.

This is an uncharacterized protein from Bacillus subtilis (strain 168).